The primary structure comprises 186 residues: Adenine phosphoribosyltransferase (186 aa).

This sequence belongs to the purine/pyrimidine phosphoribosyltransferase family. As to quaternary structure, homodimer.

Its subcellular location is the cytoplasm. It carries out the reaction AMP + diphosphate = 5-phospho-alpha-D-ribose 1-diphosphate + adenine. Its pathway is purine metabolism; AMP biosynthesis via salvage pathway; AMP from adenine: step 1/1. In terms of biological role, catalyzes a salvage reaction resulting in the formation of AMP, that is energically less costly than de novo synthesis. The polypeptide is Adenine phosphoribosyltransferase (Xanthomonas oryzae pv. oryzae (strain MAFF 311018)).